The following is a 498-amino-acid chain: ATP synthase subunit beta, chloroplastic (498 aa).

172-179 contributes to the ATP binding site; sequence GGAGVGKT.

Belongs to the ATPase alpha/beta chains family. F-type ATPases have 2 components, CF(1) - the catalytic core - and CF(0) - the membrane proton channel. CF(1) has five subunits: alpha(3), beta(3), gamma(1), delta(1), epsilon(1). CF(0) has four main subunits: a(1), b(1), b'(1) and c(9-12).

It localises to the plastid. It is found in the chloroplast thylakoid membrane. The enzyme catalyses ATP + H2O + 4 H(+)(in) = ADP + phosphate + 5 H(+)(out). Its function is as follows. Produces ATP from ADP in the presence of a proton gradient across the membrane. The catalytic sites are hosted primarily by the beta subunits. This chain is ATP synthase subunit beta, chloroplastic, found in Solanum tuberosum (Potato).